The primary structure comprises 216 residues: Ribose-5-phosphate isomerase A (216 aa).

Substrate is bound by residues 26 to 29 (TGST), 79 to 82 (DGAD), and 92 to 95 (KGGG). E101 (proton acceptor) is an active-site residue. A substrate-binding site is contributed by K119.

This sequence belongs to the ribose 5-phosphate isomerase family. In terms of assembly, homodimer.

It carries out the reaction aldehydo-D-ribose 5-phosphate = D-ribulose 5-phosphate. It functions in the pathway carbohydrate degradation; pentose phosphate pathway; D-ribose 5-phosphate from D-ribulose 5-phosphate (non-oxidative stage): step 1/1. Catalyzes the reversible conversion of ribose-5-phosphate to ribulose 5-phosphate. The polypeptide is Ribose-5-phosphate isomerase A (Legionella pneumophila subsp. pneumophila (strain Philadelphia 1 / ATCC 33152 / DSM 7513)).